A 329-amino-acid chain; its full sequence is NADH-quinone oxidoreductase subunit H (329 aa).

Transmembrane regions (helical) follow at residues Leu9 to Ile29, Gly42 to Phe62, Leu75 to Ile95, Ile117 to Gly137, Ile154 to Val174, Gly188 to Ala208, Leu238 to Ile258, Trp269 to Trp291, and Trp309 to Ile329.

This sequence belongs to the complex I subunit 1 family. As to quaternary structure, NDH-1 is composed of 14 different subunits. Subunits NuoA, H, J, K, L, M, N constitute the membrane sector of the complex.

It localises to the cell inner membrane. It carries out the reaction a quinone + NADH + 5 H(+)(in) = a quinol + NAD(+) + 4 H(+)(out). NDH-1 shuttles electrons from NADH, via FMN and iron-sulfur (Fe-S) centers, to quinones in the respiratory chain. The immediate electron acceptor for the enzyme in this species is believed to be ubiquinone. Couples the redox reaction to proton translocation (for every two electrons transferred, four hydrogen ions are translocated across the cytoplasmic membrane), and thus conserves the redox energy in a proton gradient. This subunit may bind ubiquinone. This is NADH-quinone oxidoreductase subunit H from Helicobacter acinonychis (strain Sheeba).